The chain runs to 481 residues: Tryptophan biosynthesis protein TrpCF (481 aa).

Residues 1-283 form an indole-3-glycerol phosphate synthase region; that stretch reads MKMTDFNTQQ…LAVRKVTLGE (283 aa). Positions 284–481 are N-(5'-phosphoribosyl)anthranilate isomerase; that stretch reads NKVCGLTHPD…QAAFHAIRNY (198 aa).

This sequence in the N-terminal section; belongs to the TrpC family. The protein in the C-terminal section; belongs to the TrpF family. In terms of assembly, monomer.

It carries out the reaction N-(5-phospho-beta-D-ribosyl)anthranilate = 1-(2-carboxyphenylamino)-1-deoxy-D-ribulose 5-phosphate. The enzyme catalyses 1-(2-carboxyphenylamino)-1-deoxy-D-ribulose 5-phosphate + H(+) = (1S,2R)-1-C-(indol-3-yl)glycerol 3-phosphate + CO2 + H2O. It functions in the pathway amino-acid biosynthesis; L-tryptophan biosynthesis; L-tryptophan from chorismate: step 3/5. It participates in amino-acid biosynthesis; L-tryptophan biosynthesis; L-tryptophan from chorismate: step 4/5. Bifunctional enzyme that catalyzes two sequential steps of tryptophan biosynthetic pathway. The first reaction is catalyzed by the isomerase, coded by the TrpF domain; the second reaction is catalyzed by the synthase, coded by the TrpC domain. The chain is Tryptophan biosynthesis protein TrpCF (trpC) from Vibrio parahaemolyticus serotype O3:K6 (strain RIMD 2210633).